The chain runs to 964 residues: Probable LRR receptor-like serine/threonine-protein kinase IRK (964 aa).

A signal peptide spans 1-20 (MYKALIFTVLLVSAVAPVRS). The Extracellular segment spans residues 21-603 (LDPPLNDDVL…GHKRILLSIS (583 aa)). 11 LRR repeats span residues 92–116 (LQFLHKLSLSNNNLTGIINPNMLLS), 117–141 (LVNLKVVDLSSNGLSGSLPDEFFRQ), 143–166 (GSLRVLSLAKNKLTGKIPVSISSC), 168–190 (SLAALNLSSNGFSGSMPLGIWSL), 191–214 (NTLRSLDLSRNELEGEFPEKIDRL), 215–238 (NNLRALDLSRNRLSGPIPSEIGSC), 240–261 (LLKTIDLSENSLSGSLPNTFQQ), 263–286 (SLCYSLNLGKNALEGEVPKWIGEM), 287–310 (RSLETLDLSMNKFSGQVPDSIGNL), 312–334 (ALKVLNFSGNGLIGSLPVSTANC), and 335–358 (INLLALDLSGNSLTGKLPMWLFQD). N-linked (GlcNAc...) asparagine glycosylation is present at Asn104. N-linked (GlcNAc...) asparagine glycosylation is present at Asn173. The N-linked (GlcNAc...) asparagine glycan is linked to Asn317. Asn370 carries an N-linked (GlcNAc...) asparagine glycan. 7 LRR repeats span residues 375 to 399 (IKKIQVLDLSHNAFSGEIGAGLGDL), 400 to 423 (RDLEGLHLSRNSLTGPIPSTIGEL), 425 to 447 (HLSVLDVSHNQLNGMIPRETGGA), 448 to 471 (VSLEELRLENNLLEGNIPSSIKNC), 472 to 495 (SSLRSLILSHNKLLGSIPPELAKL), 496 to 519 (TRLEEVDLSFNELAGTLPKQLANL), and 521 to 544 (YLHTFNISHNHLFGELPAGGIFNG). Asn470 is a glycosylation site (N-linked (GlcNAc...) asparagine). Asn526, Asn562, and Asn578 each carry an N-linked (GlcNAc...) asparagine glycan. A helical membrane pass occupies residues 604–624 (SLIAISAAAAIVVGVIAITVL). The Cytoplasmic portion of the chain corresponds to 625-964 (NLRVRASTVS…SGSSDELGSS (340 aa)). A Protein kinase domain is found at 678–951 (LNKDCELGRG…GEAVNILRMI (274 aa)). Residues 684-692 (LGRGGFGAV) and Lys706 each bind ATP.

The protein belongs to the protein kinase superfamily. Ser/Thr protein kinase family. In terms of assembly, interacts with IRKI. In terms of processing, autophosphorylated. Highly expressed in root tips, shoot apices and developing flowers.

It is found in the cell membrane. The enzyme catalyses L-seryl-[protein] + ATP = O-phospho-L-seryl-[protein] + ADP + H(+). It carries out the reaction L-threonyl-[protein] + ATP = O-phospho-L-threonyl-[protein] + ADP + H(+). This is Probable LRR receptor-like serine/threonine-protein kinase IRK from Arabidopsis thaliana (Mouse-ear cress).